The chain runs to 988 residues: Fanconi-associated nuclease 1 (988 aa).

The disordered stretch occupies residues 1–39 (MESQTGRKSARRLSMTKKKSQSVCPIKERTSNGGAASIT). Basic residues predominate over residues 8-20 (KSARRLSMTKKKS). A UBZ4-type zinc finger spans residues 49 to 77 (KLACPLCGKLVPRYKINEHIDSQCQNFLV). Residues cysteine 52, cysteine 55, histidine 67, and cysteine 72 each coordinate Zn(2+). Disordered stretches follow at residues 87 to 115 (TKAP…TSPF), 164 to 256 (TRVS…NTTE), and 269 to 307 (SSIE…TTQE). The span at 89-98 (APSNSALASN) shows a compositional bias: polar residues. Basic and acidic residues-rich tracts occupy residues 99–111 (NERE…KDAD) and 167–182 (SDNE…RSQK). Polar residues predominate over residues 183-195 (ENCMNSLTFGSER). The segment covering 224-238 (SDSSISSDVHTSSSS) has biased composition (low complexity). The span at 272–283 (ERGDESKVKSDQ) shows a compositional bias: basic and acidic residues. Residues 284–303 (TEASSSAYDVPTSKSPIKSK) are compositionally biased toward polar residues. Residues 636-663 (SRGVEILQRLKRYEDAVEQLRNLLSQSV) adopt a coiled-coil conformation. Mn(2+) contacts are provided by glutamate 805, aspartate 931, glutamate 946, and valine 947. The VRR-NUC domain maps to 866–978 (VETLQDLIAD…GADVEVCHVT (113 aa)).

It belongs to the FAN1 family. Interacts with fancd2 (when monoubiquitinated). The cofactor is Mn(2+). Mg(2+) serves as cofactor.

The protein resides in the nucleus. It carries out the reaction Hydrolytically removes 5'-nucleotides successively from the 3'-hydroxy termini of 3'-hydroxy-terminated oligonucleotides.. Functionally, nuclease required for the repair of DNA interstrand cross-links (ICL) recruited at sites of DNA damage by monoubiquitinated FANCD2. Specifically involved in repair of ICL-induced DNA breaks by being required for efficient homologous recombination, probably in the resolution of homologous recombination intermediates. Acts as a 5'-3' exonuclease that anchors at a cut end of DNA and cleaves DNA successively at every third nucleotide, allowing to excise an ICL from one strand through flanking incisions. Probably keeps excising with 3'-flap annealing until it reaches and unhooks the ICL. Acts at sites that have a 5'-terminal phosphate anchor at a nick or a 1- or 2-nucleotide flap and is augmented by a 3' flap. Also has endonuclease activity toward 5'-flaps. This chain is Fanconi-associated nuclease 1 (fan1), found in Danio rerio (Zebrafish).